The sequence spans 789 residues: Ent-kaurene synthase TSP4, chloroplastic (789 aa).

2 residues coordinate Mg(2+): Asp-540 and Asp-544. The short motif at 540–544 (DDFFD) is the DDXXD motif element. Residues 638–656 (AYVSFALGPIVLPALYLVG) traverse the membrane as a helical segment. 3 residues coordinate Mg(2+): Asn-684, Arg-687, and Glu-692.

Belongs to the terpene synthase family. The cofactor is Mg(2+). In terms of tissue distribution, expressed in leaves and fruits, including trichomes.

The protein resides in the plastid. The protein localises to the chloroplast membrane. The catalysed reaction is ent-copalyl diphosphate = ent-kaur-16-ene + diphosphate. The protein operates within plant hormone biosynthesis; gibberellin biosynthesis. In terms of biological role, involved in the biosynthesis of labdane-type diterpenoid including cleroda-dienols, and peregrinol lactones and furan derivatives, dopaminergic diterpenoids that can bind to dopamine receptors in the human pituitary gland, have probably ability to lower prolactin levels, and are used to treat menstrual cycle disorders (e.g. premenstrual syndrome and mastodynia). Terpene synthase that produces ent-kaurene from ent-copalyl diphosphate. This is Ent-kaurene synthase TSP4, chloroplastic from Vitex agnus-castus (Chaste tree).